Here is a 208-residue protein sequence, read N- to C-terminus: MSTVVVKGNVNGGVQQPRRRRRQSLRRRANRVQPVVMVTAPGQPRRRRRRRGGNRRSRRTGVPRGRGSSETFVFTKDNLMGNSQGSFTFGPSLSDCPAFKDGILKAYHEYKITSILLQFVSEASSTSSGSIAYELDPHCKVSSLQSYVNQFQIPQGGAKTYQARMINGVEWHDSSEDQCRILWKGNGKSSDTAGSFRVTIRVALQNPK.

Low complexity predominate over residues 1 to 16 (MSTVVVKGNVNGGVQQ). The tract at residues 1 to 69 (MSTVVVKGNV…TGVPRGRGSS (69 aa)) is disordered. 2 stretches are compositionally biased toward basic residues: residues 17–30 (PRRR…RRAN) and 44–61 (PRRR…RRTG).

Belongs to the luteoviruses capsid protein family.

It localises to the virion. In terms of biological role, major capsid protein that self-assembles to form an icosahedral capsid with a T=3 symmetry, about 23 nm in diameter, and consisting of 180 capsid proteins monomers. Most of the 180 monomers are the major capsid protein, but a small percentage contain the minor capsid protein, which has a long C-terminal extension. The protein is Major capsid protein of Potato leafroll virus (strain Potato/Netherlands/Wageningen/1989) (PLrV).